Reading from the N-terminus, the 206-residue chain is Ras-related protein Rab-18 (206 aa).

Met1 is subject to N-acetylmethionine. Residues Ser17, Gly20, Lys21, Ser22, Ser23, Asp34, Pro35, Thr40, Gly66, Lys123, and Asp125 each coordinate GTP. Residue Ser22 participates in Mg(2+) binding. 2 short sequence motifs (switch) span residues 31 to 45 (DTFD…GVDF) and 63 to 80 (DTAG…YYRG). Thr40 is a binding site for Mg(2+). Ser144 is modified (phosphoserine). Ala152 contacts GTP. Cys199 carries the S-palmitoyl cysteine lipid modification. Cys203 carries the cysteine methyl ester modification. Residue Cys203 is the site of S-geranylgeranyl cysteine attachment. A propeptide spans 204–206 (SVL) (removed in mature form).

This sequence belongs to the small GTPase superfamily. Rab family. Interacts (in GTP-bound form) with ZFYVE1. Interacts with ZW10 and this interaction is enhanced in the presence of ZFYVE1. Interacts with BSCL2. Mg(2+) is required as a cofactor. Expression is high in the brain, moderate in the pituitary, and low in the liver. Detected in all tissues. Highly enriched on apical endocytic structures in polarized epithelial cells of kidney proximal tubules. Detected on both the apical and basolateral domains in epithelial cells of the intestine.

The protein localises to the endoplasmic reticulum membrane. The protein resides in the golgi apparatus. It localises to the cis-Golgi network membrane. Its subcellular location is the lipid droplet. It is found in the apical cell membrane. The catalysed reaction is GTP + H2O = GDP + phosphate + H(+). Its activity is regulated as follows. Regulated by guanine nucleotide exchange factor (GEF) RAB3GAP1-RAB3GAP2 complex at the cis-Golgi membrane which promotes the exchange of bound GDP for free GTP. Regulated by GTPase activating protein (GAP) TBC1D20 at the ER membrane which increases the GTP hydrolysis activity. Inhibited by GDP dissociation inhibitors (GDIs) which prevent Rab-GDP dissociation. In terms of biological role, the small GTPases Rab are key regulators of intracellular membrane trafficking, from the formation of transport vesicles to their fusion with membranes. Rabs cycle between an inactive GDP-bound form and an active GTP-bound form that is able to recruit to membranes different sets of downstream effectors directly responsible for vesicle formation, movement, tethering and fusion. RAB18 is required for the localization of ZFYVE1 to lipid droplets and for its function in mediating the formation of endoplasmic reticulum-lipid droplets (ER-LD) contacts. Also required for maintaining endoplasmic reticulum structure. Plays a role in apical endocytosis/recycling. Plays a key role in eye and brain development and neurodegeneration. The protein is Ras-related protein Rab-18 of Mus musculus (Mouse).